The sequence spans 328 residues: Tetraacyldisaccharide 4'-kinase (328 aa).

Residue 55-62 (TAGGNGKT) coordinates ATP.

This sequence belongs to the LpxK family.

The catalysed reaction is a lipid A disaccharide + ATP = a lipid IVA + ADP + H(+). Its pathway is glycolipid biosynthesis; lipid IV(A) biosynthesis; lipid IV(A) from (3R)-3-hydroxytetradecanoyl-[acyl-carrier-protein] and UDP-N-acetyl-alpha-D-glucosamine: step 6/6. Functionally, transfers the gamma-phosphate of ATP to the 4'-position of a tetraacyldisaccharide 1-phosphate intermediate (termed DS-1-P) to form tetraacyldisaccharide 1,4'-bis-phosphate (lipid IVA). This chain is Tetraacyldisaccharide 4'-kinase, found in Escherichia coli O6:K15:H31 (strain 536 / UPEC).